A 111-amino-acid chain; its full sequence is Large ribosomal subunit protein uL23 (111 aa).

Belongs to the universal ribosomal protein uL23 family. Part of the 50S ribosomal subunit. Contacts protein L29, and trigger factor when it is bound to the ribosome.

Functionally, one of the early assembly proteins it binds 23S rRNA. One of the proteins that surrounds the polypeptide exit tunnel on the outside of the ribosome. Forms the main docking site for trigger factor binding to the ribosome. This is Large ribosomal subunit protein uL23 from Chlamydia abortus (strain DSM 27085 / S26/3) (Chlamydophila abortus).